Here is a 110-residue protein sequence, read N- to C-terminus: SOSS complex subunit C (110 aa).

This sequence belongs to the SOSS-C family. Belongs to the multiprotein complex Integrator. Component of the SOSS complex, composed of soss-b (soss-b1/nabp2 or soss-b2/nabp1), soss-a/ints3 and soss-c/inip.

The protein localises to the nucleus. Functionally, component of the SOSS complex, a multiprotein complex that functions downstream of the MRN complex to promote DNA repair and G2/M checkpoint. The SOSS complex associates with single-stranded DNA at DNA lesions and influences diverse endpoints in the cellular DNA damage response including cell-cycle checkpoint activation, recombinational repair and maintenance of genomic stability. Required for efficient homologous recombination-dependent repair of double-strand breaks (DSBs). The chain is SOSS complex subunit C (inip) from Xenopus laevis (African clawed frog).